The primary structure comprises 122 residues: Lysozyme (122 aa).

The 116-residue stretch at 3-118 folds into the I-type lysozyme domain; the sequence is GGIVSQRCLS…WNRLQKISGC (116 aa). 7 cysteine pairs are disulfide-bonded: cysteine 10/cysteine 86, cysteine 13/cysteine 118, cysteine 15/cysteine 21, cysteine 26/cysteine 35, cysteine 48/cysteine 68, cysteine 58/cysteine 64, and cysteine 82/cysteine 100. Catalysis depends on glutamate 18, which acts as the Proton donor. The Nucleophile role is filled by aspartate 29. 41 to 47 is a binding site for substrate; it reads KEAYWID. Substrate contacts are provided by residues tyrosine 72, histidine 93, 93–95, and lysine 102; that span reads HNG.

Belongs to the glycosyl hydrolase 22 family. Type-I lysozyme subfamily. As to quaternary structure, monomer.

The protein resides in the secreted. It catalyses the reaction Hydrolysis of (1-&gt;4)-beta-linkages between N-acetylmuramic acid and N-acetyl-D-glucosamine residues in a peptidoglycan and between N-acetyl-D-glucosamine residues in chitodextrins.. Has bacteriolytic activity against Gram-positive bacteria M.luteus. Also has chitinase activity. In Meretrix lusoria (Hard clam), this protein is Lysozyme.